The following is a 205-amino-acid chain: Phosphoribosyl-dephospho-CoA transferase (205 aa).

Residues Asp-134 and Asp-136 contribute to the active site.

It belongs to the MdcG family.

It catalyses the reaction apo-[malonate decarboxylase ACP] + 2'-(5''-triphospho-alpha-D-ribosyl)-3'-dephospho-CoA = holo-[malonate decarboxylase ACP] + diphosphate. Transfers 2'-(5-triphosphoribosyl)-3'-dephosphocoenzyme-A to the apo-[acyl-carrier-protein] of the malonate decarboxylase to yield holo-[acyl-carrier-protein]. The protein is Phosphoribosyl-dephospho-CoA transferase of Klebsiella pneumoniae subsp. pneumoniae (strain ATCC 700721 / MGH 78578).